Here is a 90-residue protein sequence, read N- to C-terminus: Molybdopterin synthase sulfur carrier subunit (90 aa).

Position 90 is a 1-thioglycine; alternate (G90). G90 is subject to Glycyl adenylate; alternate.

The protein belongs to the MoaD family. MOCS2A subfamily. In terms of assembly, heterotetramer; composed of 2 small (Mocs2A) and 2 large (Mocs2B) subunits. C-terminal thiocarboxylation occurs in 2 steps, it is first acyl-adenylated (-COAMP) via the hesA/moeB/thiF part of MOCS3, then thiocarboxylated (-COSH) via the rhodanese domain of MOCS3.

The protein resides in the cytoplasm. It participates in cofactor biosynthesis; molybdopterin biosynthesis. Its function is as follows. Acts as a sulfur carrier required for molybdopterin biosynthesis. Component of the molybdopterin synthase complex that catalyzes the conversion of precursor Z into molybdopterin by mediating the incorporation of 2 sulfur atoms into precursor Z to generate a dithiolene group. In the complex, serves as sulfur donor by being thiocarboxylated (-COSH) at its C-terminus by MOCS3. After interaction with Mocs2B, the sulfur is then transferred to precursor Z to form molybdopterin. The polypeptide is Molybdopterin synthase sulfur carrier subunit (Drosophila sechellia (Fruit fly)).